The primary structure comprises 38 residues: Large ribosomal subunit protein bL36 (38 aa).

This sequence belongs to the bacterial ribosomal protein bL36 family.

The chain is Large ribosomal subunit protein bL36 from Amoebophilus asiaticus (strain 5a2).